The chain runs to 190 residues: D-glycero-beta-D-manno-heptose-1,7-bisphosphate 7-phosphatase (190 aa).

The active-site Nucleophile is Asp-11. Positions 11 and 13 each coordinate Mg(2+). Substrate is bound by residues 11 to 13 (DRD), 19 to 22 (DHGY), and 53 to 56 (TNQS). The active-site Proton donor is the Asp-13. Residues Cys-92, His-94, Cys-107, and Cys-109 each coordinate Zn(2+). Residue 110-111 (RK) coordinates substrate. Mg(2+) is bound by residues Asp-136 and Lys-137. Lys-137 serves as a coordination point for substrate.

Belongs to the GmhB family. In terms of assembly, monomer. Mg(2+) is required as a cofactor. The cofactor is Zn(2+).

The protein localises to the cytoplasm. The enzyme catalyses D-glycero-beta-D-manno-heptose 1,7-bisphosphate + H2O = D-glycero-beta-D-manno-heptose 1-phosphate + phosphate. The protein operates within nucleotide-sugar biosynthesis; ADP-L-glycero-beta-D-manno-heptose biosynthesis; ADP-L-glycero-beta-D-manno-heptose from D-glycero-beta-D-manno-heptose 7-phosphate: step 2/4. It functions in the pathway bacterial outer membrane biogenesis; LPS core biosynthesis. In terms of biological role, converts the D-glycero-beta-D-manno-heptose 1,7-bisphosphate intermediate into D-glycero-beta-D-manno-heptose 1-phosphate by removing the phosphate group at the C-7 position. The protein is D-glycero-beta-D-manno-heptose-1,7-bisphosphate 7-phosphatase (gmhB) of Escherichia coli O6:H1 (strain CFT073 / ATCC 700928 / UPEC).